The primary structure comprises 500 residues: NAD(P)H-quinone oxidoreductase chain 4, chloroplastic (500 aa).

Transmembrane regions (helical) follow at residues Phe-4–Phe-24, Tyr-35–Phe-55, Gly-84–Ala-104, Leu-113–Asn-133, Leu-134–Met-154, Phe-167–Phe-187, Ile-211–His-231, His-242–Val-262, Ala-272–Ala-292, Ile-305–Asp-325, Gly-330–Gly-350, Leu-386–Thr-406, Ile-416–Met-436, and Phe-463–Phe-483.

This sequence belongs to the complex I subunit 4 family.

It is found in the plastid. The protein resides in the chloroplast thylakoid membrane. It catalyses the reaction a plastoquinone + NADH + (n+1) H(+)(in) = a plastoquinol + NAD(+) + n H(+)(out). The catalysed reaction is a plastoquinone + NADPH + (n+1) H(+)(in) = a plastoquinol + NADP(+) + n H(+)(out). The protein is NAD(P)H-quinone oxidoreductase chain 4, chloroplastic of Populus trichocarpa (Western balsam poplar).